Reading from the N-terminus, the 391-residue chain is MKCLVTGGNVKVLGKAVHSLSRIGDELYLEPLEDGLSLRTVNSSRSAYACFLFAPLFFQQYQAATPGQDLLRCKILMKSFLSVFRSLAMLEKTVEKCCISLNGRSSRLVVQLHCKFGVRKTHNLSFQDCESLQAVFDPASCPHMLRAPARVLGEAVLPFSPALAEVTLGIGRGRRVILRSYHEEEADSTAKAMVTEMCLGEEDFQQLQAQEGVAITFCLKEFRGLLSFAESANLNLSIHFDAPGRPAIFTIKDSLLDGHFVLATLSDTDSHSQDLGSPERHQPVPQLQAHSTPHPDDFANDDIDSYMIAMETTIGNEGSRVLPSISLSPGPQPPKSPGPHSEEEDEAEPSTVPGTPPPKKFRSLFFGSILAPVRSPQGPSPVLAEDSEGEG.

Tyr28 carries the post-translational modification Phosphotyrosine. The tract at residues 51-91 is possesses 3'-5' exonuclease activity; the sequence is FLFAPLFFQQYQAATPGQDLLRCKILMKSFLSVFRSLAMLE. The tract at residues 266–391 is sufficient for interaction with ABL1; sequence SDTDSHSQDL…VLAEDSEGEG (126 aa). Over residues 268–282 the composition is skewed to basic and acidic residues; that stretch reads TDSHSQDLGSPERHQ. Disordered regions lie at residues 268–301 and 319–391; these read TDSHSQDLGSPERHQPVPQLQAHSTPHPDDFAND and SRVL…EGEG. Phosphoserine occurs at positions 272, 277, and 328. Ser341 is modified (phosphoserine; by CK2). Residues Ser375 and Ser380 each carry the phosphoserine modification. Ser387 carries the phosphoserine; by CK2 modification.

This sequence belongs to the rad9 family. In terms of assembly, component of the toroidal 9-1-1 (RAD9-RAD1-HUS1) complex, composed of RAD9A, RAD1 and HUS1. The 9-1-1 complex associates with LIG1, POLB, FEN1, RAD17, HDAC1, RPA1 and RPA2. The 9-1-1 complex associates with the RAD17-RFC complex. RAD9A interacts with BCL2L1, FEN1, RAD9B, ABL1, RPA1, ATAD5 and RPA2. Interacts with DNAJC7. Interacts (when phosphorylated) with TOPBP1. In terms of processing, constitutively phosphorylated on serine and threonine amino acids in absence of DNA damage. Hyperphosphorylated by PRKCD and ABL1 upon DNA damage. Its phosphorylation by PRKCD may be required for the formation of the 9-1-1 complex. Phosphorylated at Ser-341 and Ser-387 by CK2, promoting interaction with TOPBP1.

Its subcellular location is the nucleus. It catalyses the reaction Exonucleolytic cleavage in the 3'- to 5'-direction to yield nucleoside 5'-phosphates.. Component of the 9-1-1 cell-cycle checkpoint response complex that plays a major role in DNA repair. The 9-1-1 complex is recruited to DNA lesion upon damage by the RAD17-replication factor C (RFC) clamp loader complex. Acts then as a sliding clamp platform on DNA for several proteins involved in long-patch base excision repair (LP-BER). The 9-1-1 complex stimulates DNA polymerase beta (POLB) activity by increasing its affinity for the 3'-OH end of the primer-template and stabilizes POLB to those sites where LP-BER proceeds; endonuclease FEN1 cleavage activity on substrates with double, nick, or gap flaps of distinct sequences and lengths; and DNA ligase I (LIG1) on long-patch base excision repair substrates. The 9-1-1 complex is necessary for the recruitment of RHNO1 to sites of double-stranded breaks (DSB) occurring during the S phase. RAD9A possesses 3'-&gt;5' double stranded DNA exonuclease activity. The sequence is that of Cell cycle checkpoint control protein RAD9A (RAD9A) from Homo sapiens (Human).